The following is a 223-amino-acid chain: Ribonuclease 3 (223 aa).

Positions 1-131 (MDGVDELLLR…LIGAVMVDQG (131 aa)) constitute an RNase III domain. Position 44 (E44) interacts with Mg(2+). The active site involves D48. Residues D117 and E120 each coordinate Mg(2+). Residue E120 is part of the active site. Residues 157–220 (DPKTKLQKLT…AMSALASLEN (64 aa)) enclose the DRBM domain.

This sequence belongs to the ribonuclease III family. In terms of assembly, homodimer. It depends on Mg(2+) as a cofactor.

It is found in the cytoplasm. The catalysed reaction is Endonucleolytic cleavage to 5'-phosphomonoester.. Functionally, digests double-stranded RNA. Involved in the processing of primary rRNA transcript to yield the immediate precursors to the large and small rRNAs (23S and 16S). Processes some mRNAs, and tRNAs when they are encoded in the rRNA operon. Processes pre-crRNA and tracrRNA of type II CRISPR loci if present in the organism. This Tropheryma whipplei (strain Twist) (Whipple's bacillus) protein is Ribonuclease 3.